We begin with the raw amino-acid sequence, 167 residues long: Photosystem I assembly protein Ycf3 (167 aa).

TPR repeat units lie at residues Ala-35–Pro-68, Ser-72–Leu-105, and Gly-120–Asn-153.

Belongs to the Ycf3 family.

It is found in the plastid. The protein resides in the chloroplast thylakoid membrane. In terms of biological role, essential for the assembly of the photosystem I (PSI) complex. May act as a chaperone-like factor to guide the assembly of the PSI subunits. The polypeptide is Photosystem I assembly protein Ycf3 (Chara vulgaris (Common stonewort)).